A 498-amino-acid chain; its full sequence is Glycerol kinase (498 aa).

Thr-12 lines the ADP pocket. ATP contacts are provided by Thr-12, Thr-13, and Ser-14. Thr-12 serves as a coordination point for sn-glycerol 3-phosphate. Residue Arg-16 coordinates ADP. Arg-82, Glu-83, Tyr-135, and Asp-245 together coordinate sn-glycerol 3-phosphate. Positions 82, 83, 135, 245, and 246 each coordinate glycerol. ADP contacts are provided by Thr-267 and Gly-310. ATP contacts are provided by Thr-267, Gly-310, Gln-314, and Gly-411. Gly-411 and Asn-415 together coordinate ADP.

The protein belongs to the FGGY kinase family. In terms of assembly, homotetramer and homodimer (in equilibrium).

The catalysed reaction is glycerol + ATP = sn-glycerol 3-phosphate + ADP + H(+). The protein operates within polyol metabolism; glycerol degradation via glycerol kinase pathway; sn-glycerol 3-phosphate from glycerol: step 1/1. Activated by phosphorylation and inhibited by fructose 1,6-bisphosphate (FBP). Its function is as follows. Key enzyme in the regulation of glycerol uptake and metabolism. Catalyzes the phosphorylation of glycerol to yield sn-glycerol 3-phosphate. The protein is Glycerol kinase of Clostridium botulinum (strain Alaska E43 / Type E3).